A 419-amino-acid polypeptide reads, in one-letter code: Synaptosomal-associated protein 47 (419 aa).

2 consecutive t-SNARE coiled-coil homology domains span residues 108-170 (PQGA…LSEL) and 356-418 (VLQP…MRKL).

Belongs to the SVAP1 family.

Its function is as follows. May play a role in intracellular membrane fusion. This chain is Synaptosomal-associated protein 47 (snap47), found in Danio rerio (Zebrafish).